The sequence spans 478 residues: Stromelysin-1 (478 aa).

The N-terminal stretch at 1-17 (MQNLPALLLFCGVVCSA) is a signal peptide. Positions 18 to 99 (YPVDRAAEDE…PRCGVPDVGD (82 aa)) are cleaved as a propeptide — activation peptide. The Cysteine switch signature appears at 90 to 97 (PRCGVPDV). Cys-92 is a Zn(2+) binding site. 2 residues coordinate Ca(2+): Asp-124 and Asp-158. Zn(2+) contacts are provided by His-168 and Asp-170. 4 residues coordinate Ca(2+): Asp-175, Gly-176, Gly-178, and Val-180. Position 183 (His-183) interacts with Zn(2+). The Ca(2+) site is built by Gly-190 and Asp-194. Zn(2+) is bound at residue His-196. 3 residues coordinate Ca(2+): Asp-198, Asp-199, and Glu-201. Zn(2+) is bound at residue His-218. The active site involves Glu-219. Positions 222 and 228 each coordinate Zn(2+). The segment at 260–286 (QSLYGGPPSDSSNDPVVPTESVPPGPG) is disordered. Low complexity predominate over residues 266-277 (PPSDSSNDPVVP). Hemopexin repeat units lie at residues 288–337 (PAAC…WPSL), 338–384 (PSGL…GFPP), 386–434 (VKKI…FPGV), and 435–478 (DSKV…WLNC). Cys-291 and Cys-478 form a disulfide bridge. Asp-298 lines the Ca(2+) pocket. The Ca(2+) site is built by Asp-390 and Asp-439. An N-linked (GlcNAc...) asparagine glycan is attached at Asn-452.

The protein belongs to the peptidase M10A family. Requires Ca(2+) as cofactor. It depends on Zn(2+) as a cofactor.

Its subcellular location is the secreted. The protein localises to the extracellular space. The protein resides in the extracellular matrix. The catalysed reaction is Preferential cleavage where P1', P2' and P3' are hydrophobic residues.. Functionally, metalloproteinase with a rather broad substrate specificity that can degrade fibronectin, laminin, gelatins of type I, III, IV, and V; collagens III, IV, X, and IX, and cartilage proteoglycans. Activates different molecules including growth factors, plasminogen or other matrix metalloproteinases such as MMP9. Once released into the extracellular matrix (ECM), the inactive pro-enzyme is activated by the plasmin cascade signaling pathway. Also acts intracellularly. For example, in dopaminergic neurons, gets activated by the serine protease HTRA2 upon stress and plays a pivotal role in DA neuronal degeneration by mediating microglial activation and alpha-synuclein/SNCA cleavage. In addition, plays a role in immune response and possesses antiviral activity against various viruses. Mechanistically, translocates from the cytoplasm into the cell nucleus upon virus infection to influence NF-kappa-B activities. The chain is Stromelysin-1 (MMP3) from Canis lupus familiaris (Dog).